The primary structure comprises 732 residues: E3 ubiquitin-protein ligase DCST1 (732 aa).

Over 1-46 the chain is Cytoplasmic; that stretch reads MAFLSSTLHSLGIFEKISRIKEVLKNRLLDLTKRRDQAREQQRKRP. The chain crosses the membrane as a helical span at residues 47–67; sequence HTIIQGLLLWSLPVSWIRFLW. Residues 68–76 are Extracellular-facing; it reads RQPGEFPVT. Residues 77 to 97 form a helical membrane-spanning segment; the sequence is AFLLGAGTGGLLAIGLFQLLV. The Cytoplasmic portion of the chain corresponds to 98–107; sequence NPMNIYEEQK. The chain crosses the membrane as a helical span at residues 108 to 128; that stretch reads VVALYCLASLGAIGWGTSPHI. Residues 129–394 lie on the Extracellular side of the membrane; sequence RCASLLLVPK…VRDYVRQQET (266 aa). N-linked (GlcNAc...) asparagine glycans are attached at residues asparagine 184, asparagine 217, asparagine 346, and asparagine 374. The chain crosses the membrane as a helical span at residues 395 to 415; the sequence is YLQWAMGLLHVLLSCTFLLVF. At 416–489 the chain is on the cytoplasmic side; sequence HSAFSYMDHY…RYVIRELLET (74 aa). Residues 490–510 form a helical membrane-spanning segment; it reads LPIVLLLLVLCAIDWALYSVF. Over 511–576 the chain is Extracellular; that stretch reads DTIRQHSFVQ…PQPISLNARD (66 aa). Residue asparagine 551 is glycosylated (N-linked (GlcNAc...) asparagine). Residues 577 to 597 form a helical membrane-spanning segment; that stretch reads YFKASLPTLLLVCLCLAQAFG. The Cytoplasmic portion of the chain corresponds to 598 to 732; sequence YRLRRVIAAF…DSNDDAVYGD (135 aa). The RING-type; degenerate zinc-finger motif lies at 672–711; sequence CVVCQAMETPDSYVCPTPDCKALYCRSCWDDMQRLCPVCT.

In terms of assembly, interacts with STAT2; the interaction results in STAT2 'Lys-48'-linked ubiquitination leading to its proteasomal degradation. Interacts with DCST2. As to expression, expressed in testis.

The protein resides in the cell membrane. Its subcellular location is the cytoplasmic vesicle. It is found in the secretory vesicle. The protein localises to the acrosome membrane. It carries out the reaction S-ubiquitinyl-[E2 ubiquitin-conjugating enzyme]-L-cysteine + [acceptor protein]-L-lysine = [E2 ubiquitin-conjugating enzyme]-L-cysteine + N(6)-ubiquitinyl-[acceptor protein]-L-lysine.. Its pathway is protein modification; protein ubiquitination. Functionally, E3 ubiquitin-protein ligase which mediates 'Lys-48'-linked ubiquitination of STAT2 and induces its proteasomal degradation thereby negatively regulating type-I-interferon signaling. In terms of biological role, essential sperm cell-surface protein required for sperm-egg fusion and fertilization. In Mus musculus (Mouse), this protein is E3 ubiquitin-protein ligase DCST1 (Dcst1).